Here is a 63-residue protein sequence, read N- to C-terminus: Large ribosomal subunit protein uL30 (63 aa).

The protein belongs to the universal ribosomal protein uL30 family. Part of the 50S ribosomal subunit.

The sequence is that of Large ribosomal subunit protein uL30 from Chlorobium chlorochromatii (strain CaD3).